The following is a 453-amino-acid chain: Nuclear and cytoplasmic polyadenylated RNA-binding protein PUB1 (453 aa).

The interval 1-67 is disordered; sequence MSENNEEQHQ…PSVVPANAIT (67 aa). An N-acetylserine modification is found at S2. RRM domains lie at 75–152 and 162–240; these read RVLY…WAFQ and FNLF…WAAK. Residues 241–262 are disordered; the sequence is RDNNNNNNYQQRRNYGNNNRGG. Positions 244-262 are enriched in low complexity; the sequence is NNNNNYQQRRNYGNNNRGG. Omega-N-methylarginine is present on R260. Residues 260 to 264 are RNA-binding RGG-box; sequence RGGFR. The 73-residue stretch at 341–413 folds into the RRM 3 domain; that stretch reads TTAYIGNIPH…RNLRTGWGKE (73 aa). The tract at residues 419–453 is disordered; it reads PQQQQQGGQPLIMNDQQQPVMSEQQQQQQQQQQQQ. The span at 434-453 shows a compositional bias: low complexity; the sequence is QQQPVMSEQQQQQQQQQQQQ.

As to quaternary structure, interacts with NAB2.

Its subcellular location is the cytoplasm. It localises to the nucleus. It is found in the P-body. The protein resides in the stress granule. Functionally, may be associated with hnRNA within the nucleus and remains associated during nucleocytoplasmic mRNA transport, once the proteins are in the cytoplasm, disassembly of PUB1-RNA complexes may occur prior to PAB1 binding and formation of a translationally competent RNP complex. Binds to polyadenylated RNA; prefers to bind poly(rU); binds to T-rich single-stranded DNA. In Saccharomyces cerevisiae (strain ATCC 204508 / S288c) (Baker's yeast), this protein is Nuclear and cytoplasmic polyadenylated RNA-binding protein PUB1.